A 454-amino-acid chain; its full sequence is Putative flavin-containing monoamine oxidase AofH (454 aa).

This sequence belongs to the flavin monoamine oxidase family. The cofactor is FAD.

The sequence is that of Putative flavin-containing monoamine oxidase AofH (aofH) from Mycobacterium tuberculosis (strain CDC 1551 / Oshkosh).